The following is a 418-amino-acid chain: MGSATLLKESGPREVFCGLTSIVWLHRRMPDAFFLVVGSRTCAHLIQSAAGVMIFAEPRFGTAILGEKDLAGLADAHDELDRVVNDLLARRPEIRTLFLVGSCPSEVIKLDLARVAERLNGELQGRVRVLNYSGSGIETTFTQGEDGALKAMVPLMPNSNEAQLLLVGTMANAVEDRLIHLFERLGIPSVSSLPPRQSTDLPSVGPGTRVLLTQPYLTDTARELKDRGAEILQAPFPLGAEGSRLWMEAAAKAFGINNNHVANTLAPLIERAQKALSPYKEQLAGKRIFLMPESQLEIPLARFLHRECGMELVEVGVPYLNREMMQSELELLPQNTPVMEGQHVEKQLDRVREQRPDLVVCGMGLANPLEAEEIATKWSIELIFSPIHGIDQAADLAELFARPLHRRNLLNNQLLVSV.

[4Fe-4S] cluster is bound by residues cysteine 17, cysteine 42, and cysteine 103.

Belongs to the BchN/ChlN family. As to quaternary structure, protochlorophyllide reductase is composed of three subunits; ChlL, ChlN and ChlB. Forms a heterotetramer of two ChlB and two ChlN subunits. The cofactor is [4Fe-4S] cluster.

It catalyses the reaction chlorophyllide a + oxidized 2[4Fe-4S]-[ferredoxin] + 2 ADP + 2 phosphate = protochlorophyllide a + reduced 2[4Fe-4S]-[ferredoxin] + 2 ATP + 2 H2O. It functions in the pathway porphyrin-containing compound metabolism; chlorophyll biosynthesis (light-independent). Its function is as follows. Component of the dark-operative protochlorophyllide reductase (DPOR) that uses Mg-ATP and reduced ferredoxin to reduce ring D of protochlorophyllide (Pchlide) to form chlorophyllide a (Chlide). This reaction is light-independent. The NB-protein (ChlN-ChlB) is the catalytic component of the complex. The chain is Light-independent protochlorophyllide reductase subunit N from Prochlorococcus marinus (strain MIT 9313).